Here is a 164-residue protein sequence, read N- to C-terminus: UPF0178 protein RPB_3201 (164 aa).

This sequence belongs to the UPF0178 family.

The chain is UPF0178 protein RPB_3201 from Rhodopseudomonas palustris (strain HaA2).